A 450-amino-acid polypeptide reads, in one-letter code: 23S rRNA (uracil(1939)-C(5))-methyltransferase RlmD (450 aa).

In terms of domain architecture, TRAM spans S12 to K70. The [4Fe-4S] cluster site is built by C83, C89, C92, and C171. Positions 283, 312, 317, 333, 360, and 380 each coordinate S-adenosyl-L-methionine. The active-site Nucleophile is C406.

Belongs to the class I-like SAM-binding methyltransferase superfamily. RNA M5U methyltransferase family. RlmD subfamily.

It carries out the reaction uridine(1939) in 23S rRNA + S-adenosyl-L-methionine = 5-methyluridine(1939) in 23S rRNA + S-adenosyl-L-homocysteine + H(+). Functionally, catalyzes the formation of 5-methyl-uridine at position 1939 (m5U1939) in 23S rRNA. This Shewanella baltica (strain OS223) protein is 23S rRNA (uracil(1939)-C(5))-methyltransferase RlmD.